The following is a 245-amino-acid chain: Adenosylcobinamide-GDP ribazoletransferase (245 aa).

Transmembrane regions (helical) follow at residues 31–51 (LLHYPAVGLFLGALLWLAALL), 57–77 (PLLQAALLLALWVALTGALHL), 109–129 (VAVVVLVIMLLLKFSALLVVL), 134–154 (PAALVLAPLLGRAALLALFLC), and 176–196 (ALMVLALVVIGCLLLGATGLL).

This sequence belongs to the CobS family. Mg(2+) is required as a cofactor.

It localises to the cell inner membrane. The enzyme catalyses alpha-ribazole + adenosylcob(III)inamide-GDP = adenosylcob(III)alamin + GMP + H(+). It carries out the reaction alpha-ribazole 5'-phosphate + adenosylcob(III)inamide-GDP = adenosylcob(III)alamin 5'-phosphate + GMP + H(+). It functions in the pathway cofactor biosynthesis; adenosylcobalamin biosynthesis; adenosylcobalamin from cob(II)yrinate a,c-diamide: step 7/7. Joins adenosylcobinamide-GDP and alpha-ribazole to generate adenosylcobalamin (Ado-cobalamin). Also synthesizes adenosylcobalamin 5'-phosphate from adenosylcobinamide-GDP and alpha-ribazole 5'-phosphate. The polypeptide is Adenosylcobinamide-GDP ribazoletransferase (Stutzerimonas stutzeri (strain A1501) (Pseudomonas stutzeri)).